The chain runs to 180 residues: Pro-glucagon (180 aa).

Positions Met1–Gln20 are cleaved as a signal peptide. The disordered stretch occupies residues Thr26 to Gly56. Ser54 carries the post-translational modification Phosphoserine. The propeptide occupies Asn84–Ala89. Phosphoserine occurs at positions 105 and 108. The residue at position 127 (Arg127) is an Arginine amide. A propeptide spanning residues Asp131–Arg145 is cleaved from the precursor. Phosphoserine is present on residues Ser150 and Ser152.

The protein belongs to the glucagon family. In terms of processing, proglucagon is post-translationally processed in a tissue-specific manner in pancreatic A cells and intestinal L cells. In pancreatic A cells, the major bioactive hormone is glucagon cleaved by PCSK2/PC2. In the intestinal L cells PCSK1/PC1 liberates GLP-1, GLP-2, glicentin and oxyntomodulin. GLP-1 is further N-terminally truncated by post-translational processing in the intestinal L cells resulting in GLP-1(7-37) GLP-1-(7-36)amide. The C-terminal amidation is neither important for the metabolism of GLP-1 nor for its effects on the endocrine pancreas. In terms of tissue distribution, glucagon is secreted in the A cells of the islets of Langerhans. GLP-1, GLP-2, oxyntomodulin and glicentin are secreted from enteroendocrine cells throughout the gastrointestinal tract. GLP-1 and GLP-2 are also secreted in selected neurons in the brain.

Its subcellular location is the secreted. Functionally, plays a key role in glucose metabolism and homeostasis. Regulates blood glucose by increasing gluconeogenesis and decreasing glycolysis. A counterregulatory hormone of insulin, raises plasma glucose levels in response to insulin-induced hypoglycemia. Plays an important role in initiating and maintaining hyperglycemic conditions in diabetes. Its function is as follows. Potent stimulator of glucose-dependent insulin release. Also stimulates insulin release in response to IL6. Plays important roles on gastric motility and the suppression of plasma glucagon levels. May be involved in the suppression of satiety and stimulation of glucose disposal in peripheral tissues, independent of the actions of insulin. Has growth-promoting activities on intestinal epithelium. May also regulate the hypothalamic pituitary axis (HPA) via effects on LH, TSH, CRH, oxytocin, and vasopressin secretion. Increases islet mass through stimulation of islet neogenesis and pancreatic beta cell proliferation. Inhibits beta cell apoptosis. Stimulates intestinal growth and up-regulates villus height in the small intestine, concomitant with increased crypt cell proliferation and decreased enterocyte apoptosis. The gastrointestinal tract, from the stomach to the colon is the principal target for GLP-2 action. Plays a key role in nutrient homeostasis, enhancing nutrient assimilation through enhanced gastrointestinal function, as well as increasing nutrient disposal. Stimulates intestinal glucose transport and decreases mucosal permeability. In terms of biological role, significantly reduces food intake. Inhibits gastric emptying in humans. Suppression of gastric emptying may lead to increased gastric distension, which may contribute to satiety by causing a sensation of fullness. Functionally, may modulate gastric acid secretion and the gastro-pyloro-duodenal activity. May play an important role in intestinal mucosal growth in the early period of life. This is Pro-glucagon (GCG) from Canis lupus familiaris (Dog).